Consider the following 221-residue polypeptide: Deep sea actinoporin Cjtox II (221 aa).

Positions 1–19 are cleaved as a signal peptide; sequence MNRLIIVCLVAAMIYSTIA. Residues 20–42 constitute a propeptide that is removed on maturation; it reads LPMKEDISNDERPISVNEEPVKK. 7 residues coordinate phosphocholine: S96, V129, S147, P149, Y175, Y179, and Y180. Residues 147 to 162 form a trp-rich region, which is important for the binding to lipid membrane region; that stretch reads SVPYDYNWYENWWNIK. The short motif at 186 to 188 is the Cell attachment site, crucial for protein stability element; it reads KGD.

Belongs to the actinoporin family. Sea anemone subfamily. In terms of assembly, octamer or nonamer in membranes. Monomer in the soluble state. Expressed in actinopharynx and in gastric filaments. Is not expressed in tentacles.

It localises to the secreted. It is found in the nematocyst. Its subcellular location is the target cell membrane. May be involved in digestion of prey. Pore-forming protein that forms cations-selective hydrophilic pores of around 1 nm and causes cytolysis. Pore formation is a multi-step process that involves specific recognition of membrane sphingomyelin (but neither cholesterol nor phosphatidylcholine) using aromatic rich region and adjacent phosphocholine (POC) binding site, firm binding to the membrane (mainly driven by hydrophobic interactions) accompanied by the transfer of the N-terminal region to the lipid-water interface and finally pore formation after oligomerization of monomers. Shows hemolytic activity on equine erythrocytes. Hemolysis is highly inhibited in presence of sphingomyelin, suggesting that this protein targets sphingomyelin. This chain is Deep sea actinoporin Cjtox II, found in Cribrinopsis japonica (Deep-sea anemone).